The sequence spans 100 residues: Large ribosomal subunit protein uL23 (100 aa).

This sequence belongs to the universal ribosomal protein uL23 family. As to quaternary structure, part of the 50S ribosomal subunit. Contacts protein L29, and trigger factor when it is bound to the ribosome.

Functionally, one of the early assembly proteins it binds 23S rRNA. One of the proteins that surrounds the polypeptide exit tunnel on the outside of the ribosome. Forms the main docking site for trigger factor binding to the ribosome. The protein is Large ribosomal subunit protein uL23 of Prochlorococcus marinus (strain MIT 9312).